Here is a 398-residue protein sequence, read N- to C-terminus: Dihydrolipoyllysine-residue succinyltransferase component of 2-oxoglutarate dehydrogenase complex (398 aa).

The 76-residue stretch at 2-77 folds into the Lipoyl-binding domain; that stretch reads SIKIIIPSLG…TVGEEVGEIN (76 aa). Lysine 43 carries the post-translational modification N6-lipoyllysine. The 38-residue stretch at 112-149 folds into the Peripheral subunit-binding (PSBD) domain; sequence ILAPSVQKLVTENKLDPNNIKGTGRGGRITKYDVLETI. Active-site residues include histidine 369 and aspartate 373.

This sequence belongs to the 2-oxoacid dehydrogenase family. In terms of assembly, forms a 24-polypeptide structural core with octahedral symmetry. Part of the 2-oxoglutarate dehydrogenase (OGDH) complex composed of E1 (2-oxoglutarate dehydrogenase), E2 (dihydrolipoamide succinyltransferase) and E3 (dihydrolipoamide dehydrogenase); the complex contains multiple copies of the three enzymatic components (E1, E2 and E3). (R)-lipoate serves as cofactor.

It carries out the reaction N(6)-[(R)-dihydrolipoyl]-L-lysyl-[protein] + succinyl-CoA = N(6)-[(R)-S(8)-succinyldihydrolipoyl]-L-lysyl-[protein] + CoA. Its pathway is amino-acid degradation; L-lysine degradation via saccharopine pathway; glutaryl-CoA from L-lysine: step 6/6. Functionally, E2 component of the 2-oxoglutarate dehydrogenase (OGDH) complex which catalyzes the second step in the conversion of 2-oxoglutarate to succinyl-CoA and CO(2). This is Dihydrolipoyllysine-residue succinyltransferase component of 2-oxoglutarate dehydrogenase complex (sucB) from Rickettsia typhi (strain ATCC VR-144 / Wilmington).